An 88-amino-acid polypeptide reads, in one-letter code: Large ribosomal subunit protein bL27 (88 aa).

Positions 1–25 are disordered; the sequence is MAHKKAGGSSRNGRDSPGQRRGIKR.

Belongs to the bacterial ribosomal protein bL27 family.

This is Large ribosomal subunit protein bL27 (rpmA) from Lawsonia intracellularis.